We begin with the raw amino-acid sequence, 278 residues long: Large ribosomal subunit protein uL2 (278 aa).

2 disordered regions span residues 26 to 57 (RSTP…QGGG) and 225 to 278 (VMNP…NKKR). A compositionally biased stretch (basic residues) spans 258 to 278 (RSPKKASNKYIVRRRKTNKKR).

The protein belongs to the universal ribosomal protein uL2 family. Part of the 50S ribosomal subunit. Forms a bridge to the 30S subunit in the 70S ribosome.

In terms of biological role, one of the primary rRNA binding proteins. Required for association of the 30S and 50S subunits to form the 70S ribosome, for tRNA binding and peptide bond formation. It has been suggested to have peptidyltransferase activity; this is somewhat controversial. Makes several contacts with the 16S rRNA in the 70S ribosome. In Streptomyces coelicolor (strain ATCC BAA-471 / A3(2) / M145), this protein is Large ribosomal subunit protein uL2.